Here is a 688-residue protein sequence, read N- to C-terminus: Polyribonucleotide nucleotidyltransferase (688 aa).

2 residues coordinate Mg(2+): aspartate 484 and aspartate 490. The KH domain occupies proline 550–isoleucine 609. The 63-residue stretch at aspartate 626–alanine 688 folds into the S1 motif domain.

This sequence belongs to the polyribonucleotide nucleotidyltransferase family. Mg(2+) is required as a cofactor.

It is found in the cytoplasm. It carries out the reaction RNA(n+1) + phosphate = RNA(n) + a ribonucleoside 5'-diphosphate. Its function is as follows. Involved in mRNA degradation. Catalyzes the phosphorolysis of single-stranded polyribonucleotides processively in the 3'- to 5'-direction. This chain is Polyribonucleotide nucleotidyltransferase, found in Helicobacter acinonychis (strain Sheeba).